A 1379-amino-acid polypeptide reads, in one-letter code: DNA-directed RNA polymerase subunit beta (1379 aa).

It belongs to the RNA polymerase beta chain family. In terms of assembly, the RNAP catalytic core consists of 2 alpha, 1 beta, 1 beta' and 1 omega subunit. When a sigma factor is associated with the core the holoenzyme is formed, which can initiate transcription.

The catalysed reaction is RNA(n) + a ribonucleoside 5'-triphosphate = RNA(n+1) + diphosphate. Its function is as follows. DNA-dependent RNA polymerase catalyzes the transcription of DNA into RNA using the four ribonucleoside triphosphates as substrates. The chain is DNA-directed RNA polymerase subunit beta from Ruegeria sp. (strain TM1040) (Silicibacter sp.).